Here is a 518-residue protein sequence, read N- to C-terminus: Phosphoacetylglucosamine mutase 1 (518 aa).

Thr-49 bears the Phosphothreonine mark. Ser-51 (phosphoserine intermediate) is an active-site residue. The Mg(2+) site is built by Ser-51, Asp-267, Asp-269, and Asp-271. A Phosphoserine modification is found at Ser-51. Substrate contacts are provided by residues 360–362, 486–490, and Arg-495; these read EAN and RASGT.

This sequence belongs to the phosphohexose mutase family. The cofactor is Mg(2+).

The protein resides in the cytoplasm. It is found in the nucleus. The enzyme catalyses N-acetyl-alpha-D-glucosamine 1-phosphate = N-acetyl-D-glucosamine 6-phosphate. It participates in nucleotide-sugar biosynthesis; UDP-N-acetyl-alpha-D-glucosamine biosynthesis; N-acetyl-alpha-D-glucosamine 1-phosphate from alpha-D-glucosamine 6-phosphate (route I): step 2/2. Catalyzes the conversion of GlcNAc-6-P into GlcNAc-1-P during the synthesis of uridine diphosphate/UDP-GlcNAc, which is a biosynthetic precursor of chitin and also supplies the amino sugars for N-linked oligosaccharides of glycoproteins. This Schizosaccharomyces pombe (strain 972 / ATCC 24843) (Fission yeast) protein is Phosphoacetylglucosamine mutase 1.